The sequence spans 172 residues: RNA silencing suppressor p19 (172 aa).

2 stretches are compositionally biased toward basic and acidic residues: residues 1–14 (MERA…REQA) and 150–172 (SERE…EESE). Disordered regions lie at residues 1-34 (MERA…KLPD) and 145-172 (LQPT…EESE).

The protein belongs to the tombusvirus protein p19 family. Homodimer.

Viral suppressor of RNA silencing which binds specifically to silencing RNAs (siRNAs). Acts as a molecular caliper to specifically select siRNAs based on the length of the duplex region of the RNA. The polypeptide is RNA silencing suppressor p19 (Cymbidium ringspot virus (CymRSV)).